The primary structure comprises 600 residues: Probable methyltransferase PMT7 (600 aa).

The Cytoplasmic portion of the chain corresponds to 1-15 (MGGGYVLFGSARSGQ). The helical; Signal-anchor for type II membrane protein transmembrane segment at 16–36 (MIMVALVLMVGSFYAGSIFGN) threads the bilayer. Residues 37–600 (NSPIYISQPS…FCRKKFWAIL (564 aa)) lie on the Lumenal side of the membrane. Residues Asn49, Asn98, Asn110, Asn157, Asn200, Asn204, Asn334, Asn447, and Asn484 are each glycosylated (N-linked (GlcNAc...) asparagine).

This sequence belongs to the methyltransferase superfamily.

The protein localises to the golgi apparatus membrane. This Arabidopsis thaliana (Mouse-ear cress) protein is Probable methyltransferase PMT7.